The chain runs to 62 residues: Excisionase (62 aa).

This Streptomyces ambofaciens protein is Excisionase (xis).